The sequence spans 450 residues: UDP-N-acetylmuramoylalanine--D-glutamate ligase (450 aa).

Residue 119 to 125 (GSNGKTT) coordinates ATP.

This sequence belongs to the MurCDEF family.

It localises to the cytoplasm. The catalysed reaction is UDP-N-acetyl-alpha-D-muramoyl-L-alanine + D-glutamate + ATP = UDP-N-acetyl-alpha-D-muramoyl-L-alanyl-D-glutamate + ADP + phosphate + H(+). Its pathway is cell wall biogenesis; peptidoglycan biosynthesis. Functionally, cell wall formation. Catalyzes the addition of glutamate to the nucleotide precursor UDP-N-acetylmuramoyl-L-alanine (UMA). This Streptococcus thermophilus (strain ATCC BAA-491 / LMD-9) protein is UDP-N-acetylmuramoylalanine--D-glutamate ligase.